Consider the following 358-residue polypeptide: Homoserine O-acetyltransferase (358 aa).

The AB hydrolase-1 domain maps to asparagine 41–aspartate 343. Serine 143 (nucleophile) is an active-site residue. Arginine 212 contacts substrate. Active-site residues include aspartate 304 and histidine 337. Aspartate 338 serves as a coordination point for substrate.

It belongs to the AB hydrolase superfamily. MetX family. In terms of assembly, homodimer.

It is found in the cytoplasm. The enzyme catalyses L-homoserine + acetyl-CoA = O-acetyl-L-homoserine + CoA. The protein operates within amino-acid biosynthesis; L-methionine biosynthesis via de novo pathway; O-acetyl-L-homoserine from L-homoserine: step 1/1. Its function is as follows. Transfers an acetyl group from acetyl-CoA to L-homoserine, forming acetyl-L-homoserine. The polypeptide is Homoserine O-acetyltransferase (Haemophilus influenzae (strain 86-028NP)).